Here is a 447-residue protein sequence, read N- to C-terminus: GTPase Der (447 aa).

EngA-type G domains follow at residues 3 to 167 (PVIA…FAQR) and 181 to 354 (IRLA…AAAM). GTP contacts are provided by residues 9-16 (GRPNVGKS), 56-60 (DTGGF), 119-122 (NKAE), 187-194 (GRPNVGKS), 234-238 (DTAGI), and 299-302 (NKWD). A KH-like domain is found at 355 to 439 (SNLSTPKLTR…PLRIELRSGK (85 aa)).

The protein belongs to the TRAFAC class TrmE-Era-EngA-EngB-Septin-like GTPase superfamily. EngA (Der) GTPase family. As to quaternary structure, associates with the 50S ribosomal subunit.

Functionally, GTPase that plays an essential role in the late steps of ribosome biogenesis. In Herminiimonas arsenicoxydans, this protein is GTPase Der.